A 167-amino-acid chain; its full sequence is Photosystem I assembly protein Ycf3 (167 aa).

TPR repeat units follow at residues 35–68, 72–105, and 120–153; these read AFTYYRDGMSAQAEGEYAEALQNYYEAMRLEIDP, SYILYNIGLIHTSNGEHAKALEYYFQALERNPSL, and GEQAIQQQDIESSKAWFNQAAEYWKQAIQLAPGN.

Belongs to the Ycf3 family.

The protein resides in the plastid. Its subcellular location is the chloroplast thylakoid membrane. Its function is as follows. Essential for the assembly of the photosystem I (PSI) complex. May act as a chaperone-like factor to guide the assembly of the PSI subunits. The sequence is that of Photosystem I assembly protein Ycf3 from Chara vulgaris (Common stonewort).